Consider the following 292-residue polypeptide: NAD kinase (292 aa).

Aspartate 73 serves as the catalytic Proton acceptor. NAD(+)-binding positions include 73 to 74, 147 to 148, histidine 158, arginine 175, aspartate 177, 188 to 193, and glutamine 247; these read DG, NE, and TAYSLS.

The protein belongs to the NAD kinase family. A divalent metal cation is required as a cofactor.

The protein localises to the cytoplasm. The enzyme catalyses NAD(+) + ATP = ADP + NADP(+) + H(+). Involved in the regulation of the intracellular balance of NAD and NADP, and is a key enzyme in the biosynthesis of NADP. Catalyzes specifically the phosphorylation on 2'-hydroxyl of the adenosine moiety of NAD to yield NADP. This is NAD kinase from Serratia proteamaculans (strain 568).